We begin with the raw amino-acid sequence, 305 residues long: Elongation factor Ts (305 aa).

The involved in Mg(2+) ion dislocation from EF-Tu stretch occupies residues 79–82; it reads TDFV.

It belongs to the EF-Ts family.

It is found in the cytoplasm. In terms of biological role, associates with the EF-Tu.GDP complex and induces the exchange of GDP to GTP. It remains bound to the aminoacyl-tRNA.EF-Tu.GTP complex up to the GTP hydrolysis stage on the ribosome. The sequence is that of Elongation factor Ts from Brucella anthropi (strain ATCC 49188 / DSM 6882 / CCUG 24695 / JCM 21032 / LMG 3331 / NBRC 15819 / NCTC 12168 / Alc 37) (Ochrobactrum anthropi).